Here is a 147-residue protein sequence, read N- to C-terminus: Phosphoribosyl-AMP cyclohydrolase (147 aa).

Mg(2+) is bound at residue D91. C92 provides a ligand contact to Zn(2+). Positions 93 and 95 each coordinate Mg(2+). Residues C109 and C116 each contribute to the Zn(2+) site.

It belongs to the PRA-CH family. As to quaternary structure, homodimer. Requires Mg(2+) as cofactor. Zn(2+) serves as cofactor.

It localises to the cytoplasm. The catalysed reaction is 1-(5-phospho-beta-D-ribosyl)-5'-AMP + H2O = 1-(5-phospho-beta-D-ribosyl)-5-[(5-phospho-beta-D-ribosylamino)methylideneamino]imidazole-4-carboxamide. Its pathway is amino-acid biosynthesis; L-histidine biosynthesis; L-histidine from 5-phospho-alpha-D-ribose 1-diphosphate: step 3/9. In terms of biological role, catalyzes the hydrolysis of the adenine ring of phosphoribosyl-AMP. This is Phosphoribosyl-AMP cyclohydrolase from Rhodopseudomonas palustris (strain BisA53).